We begin with the raw amino-acid sequence, 461 residues long: Cysteine--tRNA ligase (461 aa).

Position 28 (Cys-28) interacts with Zn(2+). The short motif at Ile-30–His-40 is the 'HIGH' region element. Zn(2+) is bound by residues Cys-209, His-234, and Glu-238. The short motif at Lys-266–Ser-270 is the 'KMSKS' region element. Lys-269 serves as a coordination point for ATP.

The protein belongs to the class-I aminoacyl-tRNA synthetase family. As to quaternary structure, monomer. The cofactor is Zn(2+).

It is found in the cytoplasm. The enzyme catalyses tRNA(Cys) + L-cysteine + ATP = L-cysteinyl-tRNA(Cys) + AMP + diphosphate. This is Cysteine--tRNA ligase from Shigella boydii serotype 18 (strain CDC 3083-94 / BS512).